Reading from the N-terminus, the 427-residue chain is Glutamate-1-semialdehyde 2,1-aminomutase (427 aa).

An N6-(pyridoxal phosphate)lysine modification is found at K267.

It belongs to the class-III pyridoxal-phosphate-dependent aminotransferase family. HemL subfamily. As to quaternary structure, homodimer. Pyridoxal 5'-phosphate is required as a cofactor.

It is found in the cytoplasm. It catalyses the reaction (S)-4-amino-5-oxopentanoate = 5-aminolevulinate. Its pathway is porphyrin-containing compound metabolism; protoporphyrin-IX biosynthesis; 5-aminolevulinate from L-glutamyl-tRNA(Glu): step 2/2. The chain is Glutamate-1-semialdehyde 2,1-aminomutase from Geobacter sulfurreducens (strain ATCC 51573 / DSM 12127 / PCA).